We begin with the raw amino-acid sequence, 258 residues long: Thiazole synthase (258 aa).

K100 (schiff-base intermediate with DXP) is an active-site residue. Residues G161, 187 to 188 (AG), and 209 to 210 (NT) each bind 1-deoxy-D-xylulose 5-phosphate.

Belongs to the ThiG family. Homotetramer. Forms heterodimers with either ThiH or ThiS.

The protein resides in the cytoplasm. It catalyses the reaction [ThiS sulfur-carrier protein]-C-terminal-Gly-aminoethanethioate + 2-iminoacetate + 1-deoxy-D-xylulose 5-phosphate = [ThiS sulfur-carrier protein]-C-terminal Gly-Gly + 2-[(2R,5Z)-2-carboxy-4-methylthiazol-5(2H)-ylidene]ethyl phosphate + 2 H2O + H(+). Its pathway is cofactor biosynthesis; thiamine diphosphate biosynthesis. In terms of biological role, catalyzes the rearrangement of 1-deoxy-D-xylulose 5-phosphate (DXP) to produce the thiazole phosphate moiety of thiamine. Sulfur is provided by the thiocarboxylate moiety of the carrier protein ThiS. In vitro, sulfur can be provided by H(2)S. This chain is Thiazole synthase, found in Campylobacter jejuni (strain RM1221).